The sequence spans 157 residues: NADPH-dependent 7-cyano-7-deazaguanine reductase (157 aa).

Cysteine 55 acts as the Thioimide intermediate in catalysis. Aspartate 62 serves as the catalytic Proton donor. Substrate-binding positions include 77–79 and 96–97; these read VES and HE.

The protein belongs to the GTP cyclohydrolase I family. QueF type 1 subfamily.

It is found in the cytoplasm. It carries out the reaction 7-aminomethyl-7-carbaguanine + 2 NADP(+) = 7-cyano-7-deazaguanine + 2 NADPH + 3 H(+). Its pathway is tRNA modification; tRNA-queuosine biosynthesis. Catalyzes the NADPH-dependent reduction of 7-cyano-7-deazaguanine (preQ0) to 7-aminomethyl-7-deazaguanine (preQ1). The polypeptide is NADPH-dependent 7-cyano-7-deazaguanine reductase (Neisseria meningitidis serogroup C / serotype 2a (strain ATCC 700532 / DSM 15464 / FAM18)).